We begin with the raw amino-acid sequence, 76 residues long: Probable insulin-like peptide alpha-type 3 (76 aa).

Positions 1-18 are cleaved as a signal peptide; sequence MFVLLIILSIILAQVTDA. 3 cysteine pairs are disulfide-bonded: C28–C58, C40–C71, and C46–C72.

This sequence belongs to the insulin family.

The protein resides in the secreted. This chain is Probable insulin-like peptide alpha-type 3 (ins-23), found in Caenorhabditis elegans.